Here is a 436-residue protein sequence, read N- to C-terminus: GTPase Der (436 aa).

2 consecutive EngA-type G domains span residues 4-167 (PTVA…PVEE) and 175-351 (IRFS…ESQN). Residues 10–17 (GRPNVGKS), 57–61 (DTGGI), 119–122 (NKVD), 181–188 (GRPNVGKS), 229–233 (DTAGM), and 294–297 (NKWD) contribute to the GTP site. The KH-like domain occupies 352–436 (KRIPSAVLND…PIHLIARKRK (85 aa)).

The protein belongs to the TRAFAC class TrmE-Era-EngA-EngB-Septin-like GTPase superfamily. EngA (Der) GTPase family. Associates with the 50S ribosomal subunit.

Its function is as follows. GTPase that plays an essential role in the late steps of ribosome biogenesis. The polypeptide is GTPase Der (Streptococcus pyogenes serotype M5 (strain Manfredo)).